The primary structure comprises 76 residues: MARKPPSFEEALTELEQLVERMEQGNLPLEESLKLFERGIELTRTCQKSLQDAEQKVQILLEENSLPTLKPFRDEP.

It belongs to the XseB family. In terms of assembly, heterooligomer composed of large and small subunits.

The protein localises to the cytoplasm. It catalyses the reaction Exonucleolytic cleavage in either 5'- to 3'- or 3'- to 5'-direction to yield nucleoside 5'-phosphates.. Its function is as follows. Bidirectionally degrades single-stranded DNA into large acid-insoluble oligonucleotides, which are then degraded further into small acid-soluble oligonucleotides. In Methylococcus capsulatus (strain ATCC 33009 / NCIMB 11132 / Bath), this protein is Exodeoxyribonuclease 7 small subunit.